The primary structure comprises 330 residues: Low-redox potential peroxidase (330 aa).

A signal peptide spans 1–24 (MRSSTHIFVSFVVYCGVFVTSAIA). Asn-27 carries an N-linked (GlcNAc...) asparagine glycan. Disulfide bonds link Cys-34/Cys-285, Cys-54/Cys-123, and Cys-251/Cys-314. Residues Gly-69, Asp-71, and Ser-73 each contribute to the Ca(2+) site. His-178 is a heme b binding site. Ser-179, Asp-196, Thr-198, and Asp-203 together coordinate Ca(2+).

This sequence belongs to the peroxidase family. Ligninase subfamily. It depends on Ca(2+) as a cofactor. The cofactor is heme b.

Its subcellular location is the secreted. The catalysed reaction is 2 a phenolic donor + H2O2 = 2 a phenolic radical donor + 2 H2O. Functionally, can oxidize the lignin redox mediator veratryl alcohol to veratryl aldehyde. May be involved in oxidation of lignocellulose substrates. This is Low-redox potential peroxidase (LnP) from Taiwanofungus camphoratus (Poroid brown-rot fungus).